The primary structure comprises 362 residues: Porin Omp2b (362 aa).

The signal sequence occupies residues M1 to A22.

This sequence belongs to the alphaproteobacteria porin family. Homotrimer.

It localises to the cell outer membrane. In terms of biological role, forms passive diffusion pores that allow small molecular weight hydrophilic materials across the outer membrane. In Brucella suis biovar 1 (strain 1330), this protein is Porin Omp2b (omp2b).